Consider the following 510-residue polypeptide: ATP synthase subunit alpha (510 aa).

169–176 serves as a coordination point for ATP; that stretch reads GDRQTGKT.

This sequence belongs to the ATPase alpha/beta chains family. F-type ATPases have 2 components, CF(1) - the catalytic core - and CF(0) - the membrane proton channel. CF(1) has five subunits: alpha(3), beta(3), gamma(1), delta(1), epsilon(1). CF(0) has three main subunits: a(1), b(2) and c(9-12). The alpha and beta chains form an alternating ring which encloses part of the gamma chain. CF(1) is attached to CF(0) by a central stalk formed by the gamma and epsilon chains, while a peripheral stalk is formed by the delta and b chains.

The protein localises to the cell inner membrane. It catalyses the reaction ATP + H2O + 4 H(+)(in) = ADP + phosphate + 5 H(+)(out). In terms of biological role, produces ATP from ADP in the presence of a proton gradient across the membrane. The alpha chain is a regulatory subunit. The polypeptide is ATP synthase subunit alpha (Rickettsia rickettsii (strain Iowa)).